We begin with the raw amino-acid sequence, 155 residues long: MSSEEGKLFVGGLNFNTDEQALEDHFSSFGPISEVVVVKDRETQRSRGFGFITFTNPEHASDVMRAMNGESLDGRQIRVDHAGKSARGTRGGAFGAHGRGRSYSRGGGDQGYGSGRYDSRPGGYGYGYGRSRDYSGSQGGYDRYSGGNYRDNYDN.

Residues 6 to 84 enclose the RRM domain; sequence GKLFVGGLNF…RQIRVDHAGK (79 aa). Arg-47 carries the omega-N-methylarginine modification. The segment at 79–155 is disordered; the sequence is VDHAGKSARG…GGNYRDNYDN (77 aa). Position 105 is an asymmetric dimethylarginine; alternate (Arg-105). Arg-105 carries the post-translational modification Dimethylated arginine; alternate. Arg-105 is subject to Omega-N-methylarginine; alternate. Residues 105–114 are compositionally biased toward gly residues; it reads RGGGDQGYGS. Omega-N-methylarginine is present on residues Arg-120 and Arg-130. A phosphoserine mark is found at Ser-135 and Ser-145. Position 153 is a phosphotyrosine (Tyr-153).

Interacts with RPL4. Associates with the 60S ribosomal subunits. Post-translationally, arg-105 is dimethylated, probably to asymmetric dimethylarginine. In terms of processing, phosphorylated. Isoform 2 is methylated. Widely expressed in the brain. Highly expressed in the cerebellum and olfactory bulb (at protein level). Expressed in neurons and glial cells.

It localises to the nucleus. Its subcellular location is the cytoplasm. The protein localises to the cell projection. The protein resides in the dendrite. Cold-inducible mRNA binding protein that enhances global protein synthesis at both physiological and mild hypothermic temperatures. Reduces the relative abundance of microRNAs, when overexpressed. Enhances phosphorylation of translation initiation factors and active polysome formation. In Rattus norvegicus (Rat), this protein is RNA-binding protein 3 (Rbm3).